Consider the following 179-residue polypeptide: MSRIGKLPIPIPKKVTITIEGQKVTVKGPLGELSRVLPPEIAVKEQENTIIVKPQEQSRRARQRYGLCRTLVANMVEGVSKGYEKRLVIQGVGYRAQVQGKTLVLNVGYSKPVEMPAPEGINIAVENNTNVIVNGINKELVGNTAAKIRAVRPPEVYKGKGVRYAGEVIKLKAGKSGKK.

Belongs to the universal ribosomal protein uL6 family. As to quaternary structure, part of the 50S ribosomal subunit.

Functionally, this protein binds to the 23S rRNA, and is important in its secondary structure. It is located near the subunit interface in the base of the L7/L12 stalk, and near the tRNA binding site of the peptidyltransferase center. This is Large ribosomal subunit protein uL6 from Trichodesmium erythraeum (strain IMS101).